The sequence spans 97 residues: Large ribosomal subunit protein uL23 (97 aa).

This sequence belongs to the universal ribosomal protein uL23 family. As to quaternary structure, part of the 50S ribosomal subunit. Contacts protein L29, and trigger factor when it is bound to the ribosome.

One of the early assembly proteins it binds 23S rRNA. One of the proteins that surrounds the polypeptide exit tunnel on the outside of the ribosome. Forms the main docking site for trigger factor binding to the ribosome. The protein is Large ribosomal subunit protein uL23 of Agrobacterium fabrum (strain C58 / ATCC 33970) (Agrobacterium tumefaciens (strain C58)).